The primary structure comprises 221 residues: Pre-rRNA-processing protein SRD1 (221 aa).

Polar residues predominate over residues 101 to 110; sequence SKNRVTSACN. Disordered regions lie at residues 101–121 and 137–161; these read SKNR…QEAN and ASIT…TILP. Over residues 142–155 the composition is skewed to basic residues; sequence KYSKKTTSRPKREK. A GATA-type zinc finger spans residues 168 to 193; sequence CSKCKDTWTIQWRSGPDQNRELCSPC. The tract at residues 201-221 is disordered; the sequence is LKKENEKKRQAADKRIDRNNP. The segment covering 203 to 221 has biased composition (basic and acidic residues); that stretch reads KENEKKRQAADKRIDRNNP.

The protein resides in the cytoplasm. It localises to the nucleus. Plays a direct or indirect role in pre-rRNA processing. The chain is Pre-rRNA-processing protein SRD1 (SRD1) from Saccharomyces cerevisiae (strain ATCC 204508 / S288c) (Baker's yeast).